The following is a 374-amino-acid chain: Serpin B8 (374 aa).

Belongs to the serpin family. Ov-serpin subfamily.

Its subcellular location is the cytoplasm. Has an important role in epithelial desmosome-mediated cell-cell adhesion. The polypeptide is Serpin B8 (SERPINB8) (Homo sapiens (Human)).